Consider the following 415-residue polypeptide: Homoserine O-acetyltransferase (415 aa).

One can recognise an AB hydrolase-1 domain in the interval 47 to 369 (NAVLVCHGLT…HGHDAFLVEP (323 aa)). The active-site Nucleophile is Ser155. Arg226 contributes to the substrate binding site. Active-site residues include Asp329 and His362. Position 363 (Asp363) interacts with substrate. Residues 383 to 415 (GVAGRAVTDTAPDGGEPDEDEDFAPVHSSLFSR) form a disordered region.

Belongs to the AB hydrolase superfamily. MetX family. Homodimer.

The protein resides in the cytoplasm. The enzyme catalyses L-homoserine + acetyl-CoA = O-acetyl-L-homoserine + CoA. It functions in the pathway amino-acid biosynthesis; L-methionine biosynthesis via de novo pathway; O-acetyl-L-homoserine from L-homoserine: step 1/1. Transfers an acetyl group from acetyl-CoA to L-homoserine, forming acetyl-L-homoserine. The protein is Homoserine O-acetyltransferase of Haloferax volcanii (strain ATCC 29605 / DSM 3757 / JCM 8879 / NBRC 14742 / NCIMB 2012 / VKM B-1768 / DS2) (Halobacterium volcanii).